We begin with the raw amino-acid sequence, 484 residues long: Acetyl-coenzyme A carboxylase carboxyl transferase subunit beta, chloroplastic (484 aa).

In terms of domain architecture, CoA carboxyltransferase N-terminal spans 223–484; sequence LWIQCDNCYG…LHAFFPLNKN (262 aa). Zn(2+)-binding residues include Cys227, Cys230, Cys243, and Cys246. The segment at 227–246 adopts a C4-type zinc-finger fold; sequence CDNCYGLMYKKVKINVCEQC.

Belongs to the AccD/PCCB family. As to quaternary structure, acetyl-CoA carboxylase is a heterohexamer composed of biotin carboxyl carrier protein, biotin carboxylase and 2 subunits each of ACCase subunit alpha and ACCase plastid-coded subunit beta (accD). It depends on Zn(2+) as a cofactor.

It localises to the plastid. It is found in the chloroplast stroma. It carries out the reaction N(6)-carboxybiotinyl-L-lysyl-[protein] + acetyl-CoA = N(6)-biotinyl-L-lysyl-[protein] + malonyl-CoA. It functions in the pathway lipid metabolism; malonyl-CoA biosynthesis; malonyl-CoA from acetyl-CoA: step 1/1. Component of the acetyl coenzyme A carboxylase (ACC) complex. Biotin carboxylase (BC) catalyzes the carboxylation of biotin on its carrier protein (BCCP) and then the CO(2) group is transferred by the transcarboxylase to acetyl-CoA to form malonyl-CoA. The chain is Acetyl-coenzyme A carboxylase carboxyl transferase subunit beta, chloroplastic from Capsella bursa-pastoris (Shepherd's purse).